The following is a 474-amino-acid chain: Magnesium transporter MRS2-A, chloroplastic (474 aa).

The N-terminal 55 residues, 1-55 (MASVSSSPSYSSQAAVLLLLHQPPHQHGHGGACLRYRGSQSQGRGNAVATSLGLS), are a transit peptide targeting the chloroplast. A disordered region spans residues 79-129 (GKDGRAVTKDEEEEAAAAAVEEEGEVEVRREEDKPGDDGSREAAARGSGSG). Over residues 88 to 103 (DEEEEAAAAAVEEEGE) the composition is skewed to acidic residues. A compositionally biased stretch (basic and acidic residues) spans 104–122 (VEVRREEDKPGDDGSREAA). 2 helical membrane passes run 412-432 (LLLQ…GIFG) and 444-464 (WAFW…FFIM). The Required for magnesium transport activity motif lies at 432–434 (GMN).

This sequence belongs to the CorA metal ion transporter (MIT) (TC 1.A.35.5) family.

The protein resides in the plastid. It localises to the chloroplast membrane. Magnesium transporter that may mediate the influx of magnesium in chloroplast. The sequence is that of Magnesium transporter MRS2-A, chloroplastic (MRS2-A) from Oryza sativa subsp. japonica (Rice).